Consider the following 458-residue polypeptide: LysM domain-containing protein ARB_05157 (458 aa).

Residues 1-19 (MVSLKVCFLLLASSELAFG) form the signal peptide. Positions 157 to 203 (AFHLVKQGEDCGTISATYGITSAQFLAWNPSAGKDCTGLWANAYACV) constitute a LysM 1 domain. Residues 210 to 232 (PPKTTSQAPQPTPTKPSNGIETP) form a disordered region. Polar residues predominate over residues 212–229 (KTTSQAPQPTPTKPSNGI). LysM domains are found at residues 245 to 291 (KFHL…YACV), 325 to 371 (KFYL…YSCV), and 409 to 455 (KFHF…YLCV).

Its subcellular location is the secreted. Might have a role in sequestration of chitin oligosaccharides (breakdown products of fungal cell walls that are released during invasion and act as triggers of host immunity) to dampen host defense. In Arthroderma benhamiae (strain ATCC MYA-4681 / CBS 112371) (Trichophyton mentagrophytes), this protein is LysM domain-containing protein ARB_05157.